The primary structure comprises 147 residues: Spermidine export protein MdtJ (147 aa).

Transmembrane regions (helical) follow at residues 1 to 21 (MIYW…TLSM), 31 to 51 (TGHI…SLAV), 54 to 74 (VALG…ITIF), and 81 to 101 (ETLS…ILLV). Residues 105–117 (TRKPKQPNRHRGN) show a composition bias toward basic residues. The disordered stretch occupies residues 105–147 (TRKPKQPNRHRGNRPPSVQGLKTQTTGHHKGVAVESGEHHAAA).

The protein belongs to the drug/metabolite transporter (DMT) superfamily. Small multidrug resistance (SMR) (TC 2.A.7.1) family. MdtJ subfamily. As to quaternary structure, forms a complex with MdtI.

Its subcellular location is the cell inner membrane. In terms of biological role, catalyzes the excretion of spermidine. The chain is Spermidine export protein MdtJ from Yersinia pseudotuberculosis serotype O:3 (strain YPIII).